A 516-amino-acid polypeptide reads, in one-letter code: Arginyl-tRNA--protein transferase 1 (516 aa).

Residues 150 to 180 (IESEEKEKEKSIKKEGSKEFIHPQSIEEKLG) are compositionally biased toward basic and acidic residues. The disordered stretch occupies residues 150-206 (IESEEKEKEKSIKKEGSKEFIHPQSIEEKLGSGEPSHPIKVHIGPKPGKGADLSKPP).

It belongs to the R-transferase family. Monomer. Interacts with LIAT1; LIAT1 is not a substrate of ATE1, the interaction takes place in the cytoplasm and seems to increase ATE1 arginyltransferase activity. In terms of assembly, interacts with LIAT1; has a higher affinity than the other isoforms. As to expression, widely expressed.

The protein localises to the nucleus. It is found in the cytoplasm. It catalyses the reaction an N-terminal L-alpha-aminoacyl-[protein] + L-arginyl-tRNA(Arg) = an N-terminal L-arginyl-L-aminoacyl-[protein] + tRNA(Arg) + H(+). Its function is as follows. Involved in the post-translational conjugation of arginine to the N-terminal aspartate or glutamate of a protein. This arginylation is required for degradation of the protein via the ubiquitin pathway. Does not arginylate cysteine residues. The sequence is that of Arginyl-tRNA--protein transferase 1 from Mus musculus (Mouse).